The sequence spans 374 residues: MRAEIQTIVADIEKSLDLLAQRMNWETAEFRLEEFNARVEDPNLWDDPAAAQKLMRDRQSLVDAMDTYKSIRQDLQDSVELIELGEMEEDAEVVKDAEDTLKALKEKAAQKELEALLDGETDPNDAFLEIKAGAGGTEACDWASMLARMYVRWAESRGFSVELQEEQAGAEAGIKSATYQIKGHNAYGWLKSESGTHRLVRISPFGKGTRETSFAAVGAYPVIDDNIEIEVNPADIRIDTYRSSGAGGQHVNTTDSAVRITHEPTGIVVTSSEKSQHQNRDIAMKALKSRLYQLELDRRNAEVNALHEAKGDAGWGNQIRSYVMQPYQMVKDLRTNHETADTKGVLDGDLDGFMAATLAMKVAGKSRADAQGED.

Residue Gln-249 is modified to N5-methylglutamine.

Belongs to the prokaryotic/mitochondrial release factor family. Methylated by PrmC. Methylation increases the termination efficiency of RF2.

The protein localises to the cytoplasm. Functionally, peptide chain release factor 2 directs the termination of translation in response to the peptide chain termination codons UGA and UAA. The sequence is that of Peptide chain release factor 2 from Ruegeria sp. (strain TM1040) (Silicibacter sp.).